Here is a 91-residue protein sequence, read N- to C-terminus: Acylphosphatase (91 aa).

The Acylphosphatase-like domain maps to 3–91 (CLRAIVKGKV…ANYSDFRIKH (89 aa)). Active-site residues include Arg18 and Asn36.

Belongs to the acylphosphatase family.

It carries out the reaction an acyl phosphate + H2O = a carboxylate + phosphate + H(+). The sequence is that of Acylphosphatase (acyP) from Dehalococcoides mccartyi (strain ATCC BAA-2100 / JCM 16839 / KCTC 5957 / BAV1).